We begin with the raw amino-acid sequence, 45 residues long: uncharacterized protein (45 aa).

Residues 1-26 (MIMGKDRQEKKLKASGRVESDRDQSI) are compositionally biased toward basic and acidic residues. Residues 1–45 (MIMGKDRQEKKLKASGRVESDRDQSIHYDGATSLEQNGRFKKRKS) form a disordered region.

This is an uncharacterized protein from Bacillus subtilis (strain 168).